The chain runs to 193 residues: E3 ubiquitin-protein ligase RMA2 (193 aa).

Residues Cys-21–Lys-75 form an RING-type zinc finger. A helical; Anchor for type IV membrane protein membrane pass occupies residues Leu-175–Leu-192.

Interacts with ERABP1. Barely detected in roots and limited to the root tips. Expressed in leaf hydathodes and in siliques.

Its subcellular location is the endoplasmic reticulum membrane. It catalyses the reaction S-ubiquitinyl-[E2 ubiquitin-conjugating enzyme]-L-cysteine + [acceptor protein]-L-lysine = [E2 ubiquitin-conjugating enzyme]-L-cysteine + N(6)-ubiquitinyl-[acceptor protein]-L-lysine.. The protein operates within protein modification; protein ubiquitination. Functionally, E3 ubiquitin-protein ligase that promotes the ubiquitination and proteasomal degradation of the auxin-binding protein ERABP1. The protein is E3 ubiquitin-protein ligase RMA2 (RMA2) of Arabidopsis thaliana (Mouse-ear cress).